The following is a 218-amino-acid chain: Adenylate kinase (218 aa).

10 to 15 (GAGKGT) is an ATP binding site. Positions 30-59 (STGDMLRAAVKAGTPLGLQAKAVMDAGQLV) are NMP. AMP-binding positions include threonine 31, arginine 36, 57–59 (QLV), 85–88 (GFPR), and glutamine 92. Positions 122–159 (GRRSHPASGRTYHVKFNPPKVEGKDDVTGEPLVQREDD) are LID. ATP contacts are provided by residues arginine 123 and 132–133 (TY). The interval 127–150 (PASGRTYHVKFNPPKVEGKDDVTG) is disordered. Residues arginine 156 and arginine 167 each contribute to the AMP site. An ATP-binding site is contributed by glycine 203.

It belongs to the adenylate kinase family. Monomer.

It localises to the cytoplasm. The catalysed reaction is AMP + ATP = 2 ADP. It participates in purine metabolism; AMP biosynthesis via salvage pathway; AMP from ADP: step 1/1. Its function is as follows. Catalyzes the reversible transfer of the terminal phosphate group between ATP and AMP. Plays an important role in cellular energy homeostasis and in adenine nucleotide metabolism. The polypeptide is Adenylate kinase (Acidovorax ebreus (strain TPSY) (Diaphorobacter sp. (strain TPSY))).